We begin with the raw amino-acid sequence, 438 residues long: Serine hydroxymethyltransferase 1 (438 aa).

(6S)-5,6,7,8-tetrahydrofolate contacts are provided by residues L130 and 134–136 (GHL). At K239 the chain carries N6-(pyridoxal phosphate)lysine.

Belongs to the SHMT family. Homodimer. Pyridoxal 5'-phosphate serves as cofactor.

The protein resides in the cytoplasm. It carries out the reaction (6R)-5,10-methylene-5,6,7,8-tetrahydrofolate + glycine + H2O = (6S)-5,6,7,8-tetrahydrofolate + L-serine. The protein operates within one-carbon metabolism; tetrahydrofolate interconversion. It participates in amino-acid biosynthesis; glycine biosynthesis; glycine from L-serine: step 1/1. Functionally, catalyzes the reversible interconversion of serine and glycine with tetrahydrofolate (THF) serving as the one-carbon carrier. This reaction serves as the major source of one-carbon groups required for the biosynthesis of purines, thymidylate, methionine, and other important biomolecules. Also exhibits THF-independent aldolase activity toward beta-hydroxyamino acids, producing glycine and aldehydes, via a retro-aldol mechanism. Thus, is able to catalyze the cleavage of L-allo-threonine. This chain is Serine hydroxymethyltransferase 1, found in Mycobacterium tuberculosis (strain ATCC 25618 / H37Rv).